Reading from the N-terminus, the 743-residue chain is Threonine synthase-like 1 (743 aa).

Lys281 is subject to N6-acetyllysine. N6-(pyridoxal phosphate)lysine is present on Lys351.

This sequence belongs to the threonine synthase family. Pyridoxal 5'-phosphate is required as a cofactor.

The polypeptide is Threonine synthase-like 1 (THNSL1) (Homo sapiens (Human)).